We begin with the raw amino-acid sequence, 182 residues long: uncharacterized protein (182 aa).

Disordered stretches follow at residues 17-53 and 128-159; these read AVSQ…QGSK and DSLG…PKRS. The segment covering 42 to 53 has biased composition (polar residues); it reads PQPQCPSAQGSK. Low complexity predominate over residues 129–138; that stretch reads SLGSSASSSS.

This is an uncharacterized protein from Homo sapiens (Human).